The chain runs to 406 residues: Peptidase T (406 aa).

Position 82 (histidine 82) interacts with Zn(2+). Aspartate 84 is an active-site residue. Aspartate 142 contributes to the Zn(2+) binding site. Glutamate 176 functions as the Proton acceptor in the catalytic mechanism. Glutamate 177, aspartate 199, and histidine 381 together coordinate Zn(2+).

It belongs to the peptidase M20B family. The cofactor is Zn(2+).

It localises to the cytoplasm. It carries out the reaction Release of the N-terminal residue from a tripeptide.. Its function is as follows. Cleaves the N-terminal amino acid of tripeptides. This chain is Peptidase T, found in Streptococcus agalactiae serotype III (strain NEM316).